The primary structure comprises 447 residues: Exodeoxyribonuclease 7 large subunit (447 aa).

Belongs to the XseA family. Heterooligomer composed of large and small subunits.

Its subcellular location is the cytoplasm. It carries out the reaction Exonucleolytic cleavage in either 5'- to 3'- or 3'- to 5'-direction to yield nucleoside 5'-phosphates.. Bidirectionally degrades single-stranded DNA into large acid-insoluble oligonucleotides, which are then degraded further into small acid-soluble oligonucleotides. The protein is Exodeoxyribonuclease 7 large subunit of Thioalkalivibrio sulfidiphilus (strain HL-EbGR7).